The following is a 280-amino-acid chain: 2-dehydro-3-deoxyphosphooctonate aldolase (280 aa).

The protein belongs to the KdsA family.

The protein resides in the cytoplasm. The catalysed reaction is D-arabinose 5-phosphate + phosphoenolpyruvate + H2O = 3-deoxy-alpha-D-manno-2-octulosonate-8-phosphate + phosphate. Its pathway is carbohydrate biosynthesis; 3-deoxy-D-manno-octulosonate biosynthesis; 3-deoxy-D-manno-octulosonate from D-ribulose 5-phosphate: step 2/3. It participates in bacterial outer membrane biogenesis; lipopolysaccharide biosynthesis. The sequence is that of 2-dehydro-3-deoxyphosphooctonate aldolase from Neisseria meningitidis serogroup A / serotype 4A (strain DSM 15465 / Z2491).